A 54-amino-acid chain; its full sequence is Rubredoxin (54 aa).

The Rubredoxin-like domain occupies 2–52; that stretch reads AKWVCKICGYIYDEDAGDPDNGISPGTKFEELPDDWVCPICGAPKSEFEKL. Residues Cys-6, Cys-9, Cys-39, and Cys-42 each coordinate Fe cation.

The protein belongs to the rubredoxin family. It depends on Fe(3+) as a cofactor.

In terms of biological role, rubredoxin is a small nonheme, iron protein lacking acid-labile sulfide. Its single Fe, chelated to 4 Cys, functions as an electron acceptor and may also stabilize the conformation of the molecule. The polypeptide is Rubredoxin (rub) (Pyrococcus furiosus (strain ATCC 43587 / DSM 3638 / JCM 8422 / Vc1)).